We begin with the raw amino-acid sequence, 158 residues long: NAD(P)H-quinone oxidoreductase subunit J, chloroplastic (158 aa).

This sequence belongs to the complex I 30 kDa subunit family. As to quaternary structure, NDH is composed of at least 16 different subunits, 5 of which are encoded in the nucleus.

It localises to the plastid. It is found in the chloroplast thylakoid membrane. It carries out the reaction a plastoquinone + NADH + (n+1) H(+)(in) = a plastoquinol + NAD(+) + n H(+)(out). The catalysed reaction is a plastoquinone + NADPH + (n+1) H(+)(in) = a plastoquinol + NADP(+) + n H(+)(out). NDH shuttles electrons from NAD(P)H:plastoquinone, via FMN and iron-sulfur (Fe-S) centers, to quinones in the photosynthetic chain and possibly in a chloroplast respiratory chain. The immediate electron acceptor for the enzyme in this species is believed to be plastoquinone. Couples the redox reaction to proton translocation, and thus conserves the redox energy in a proton gradient. The polypeptide is NAD(P)H-quinone oxidoreductase subunit J, chloroplastic (Aethionema grandiflorum (Persian stone-cress)).